The following is a 100-amino-acid chain: UPF0235 protein Cvib_0403 (100 aa).

It belongs to the UPF0235 family.

This is UPF0235 protein Cvib_0403 from Chlorobium phaeovibrioides (strain DSM 265 / 1930) (Prosthecochloris vibrioformis (strain DSM 265)).